The following is a 465-amino-acid chain: Phosphatidylserine synthase 1 (465 aa).

Topologically, residues 1 to 35 (MVSAMRSRTLSKDDVNYKMHFRMINEQQVEDITID) are cytoplasmic. A helical transmembrane segment spans residues 36–56 (FFYKPHTITLLTFTTVSLMYF). The Lumenal segment spans residues 57-68 (AFTRENTSQEDN). Residues 69–89 (IWKGILSVIFFFLIISVLAFP) form a helical membrane-spanning segment. Topologically, residues 90–102 (NGPFTRPHPAIWR) are cytoplasmic. The helical transmembrane segment at 103–123 (MVFGLSVLYFLFLVFLLFLNV) threads the bilayer. At 124–186 (EQVKAVMYWL…AMKALLIRSY (63 aa)) the chain is on the lumenal side. A helical membrane pass occupies residues 187 to 207 (GLCWTISITWEMTELFFMHLL). Topologically, residues 208–216 (PNFAECWWD) are cytoplasmic. A helical transmembrane segment spans residues 217 to 237 (QVILDILLCNGGGILLGMVVC). Over 238–286 (RFLEMRTYHWASFKDIHTTTGKIKRAVLQFTPASWIYVRWFDPKSSFQR) the chain is Lumenal. A helical membrane pass occupies residues 287–307 (VAGVYLFMIIWQLTELNTFFL). The Cytoplasmic segment spans residues 308–319 (KHIFVFQASHPL). The chain crosses the membrane as a helical span at residues 320 to 342 (SWCRILFIGIITAPTVRQYYAYL). Residues 343 to 355 (TDTQCKRVGTQCW) lie on the Lumenal side of the membrane. Residues 356–376 (VFGAIAFLEATVCIKFGQDLF) form a helical membrane-spanning segment. Residues 377–383 (SKTHLLY) lie on the Cytoplasmic side of the membrane. A helical transmembrane segment spans residues 384–404 (VFLWLFSVAVITFLCLYGMVW). Residues 405–465 (YADYCGQREK…GKVTNGVGKK (61 aa)) lie on the Lumenal side of the membrane. Positions 440 to 465 (PVKQNEGTSRRKNRHKGKVTNGVGKK) are disordered. The segment covering 449-465 (RRKNRHKGKVTNGVGKK) has biased composition (basic residues).

This sequence belongs to the phosphatidyl serine synthase family.

It localises to the endoplasmic reticulum membrane. It catalyses the reaction a 1,2-diacyl-sn-glycero-3-phosphoethanolamine + L-serine = a 1,2-diacyl-sn-glycero-3-phospho-L-serine + ethanolamine. It carries out the reaction a 1,2-diacyl-sn-glycero-3-phosphocholine + L-serine = a 1,2-diacyl-sn-glycero-3-phospho-L-serine + choline. Its pathway is phospholipid metabolism; phosphatidylserine biosynthesis. Catalyzes a base-exchange reaction in which the polar head group of phosphatidylethanolamine (PE) or phosphatidylcholine (PC) is replaced by L-serine. Catalyzes mainly the conversion of phosphatidylcholine but also converts, in vitro and to a lesser extent, phosphatidylethanolamine. This chain is Phosphatidylserine synthase 1 (ptdss1), found in Xenopus tropicalis (Western clawed frog).